An 88-amino-acid polypeptide reads, in one-letter code: Small ribosomal subunit protein bS16c (88 aa).

This sequence belongs to the bacterial ribosomal protein bS16 family.

The protein localises to the plastid. The protein resides in the chloroplast. In Coffea arabica (Arabian coffee), this protein is Small ribosomal subunit protein bS16c.